The chain runs to 756 residues: 3-O-alpha-D-glucosyl-L-rhamnose phosphorylase (756 aa).

358–359 (WD) is a substrate binding site. Glu-486 (proton donor) is an active-site residue. 590–591 (KQ) serves as a coordination point for substrate.

It belongs to the glycosyl hydrolase 65 family. In terms of assembly, monomer.

It is found in the cytoplasm. The enzyme catalyses 3-O-alpha-D-glucosyl-L-rhamnose + phosphate = beta-D-glucose 1-phosphate + L-rhamnopyranose. In terms of biological role, phosphorylase showing strict alpha-1,3-regioselectivity and producing 3-O-alpha-D-glucopyranosyl-L-rhamnopyranose. Specific for L-rhamnose as acceptor and beta-D-glucose 1-phosphate as donor. Does not phosphorylate alpha,alpha-trehalose, kojibiose, nigerose, or maltose. This chain is 3-O-alpha-D-glucosyl-L-rhamnose phosphorylase, found in Lachnoclostridium phytofermentans (strain ATCC 700394 / DSM 18823 / ISDg) (Clostridium phytofermentans).